A 152-amino-acid chain; its full sequence is Avidin (152 aa).

The signal sequence occupies residues 1 to 24; the sequence is MVHATSPLLLLLLLSLALVAPGLS. In terms of domain architecture, Avidin-like spans 26–149; it reads RKCSLTGKWT…GINIFTRLRT (124 aa). An intrachain disulfide couples Cys-28 to Cys-107. N-linked (GlcNAc...) asparagine glycosylation is present at Asn-41. Tyr-57 lines the biotin pocket.

It belongs to the avidin/streptavidin family. Homotetramer. In terms of processing, N-linked glycan at Asn-41 consists of GlcNAc(beta1-2)Man(alpha1-3)[GlcNAc(beta1-4)][Man(alpha1-?)Man(alpha1-6)] Man(beta1-4)GlcNAc(beta1-4)GlcNAc. In terms of tissue distribution, synthesized in hen oviduct and concentrated in egg white (where it represents 0.05% of the total protein).

The protein localises to the secreted. In terms of biological role, the biological function of avidin is not known. Forms a strong non-covalent specific complex with biotin (one molecule of biotin per subunit of avidin). This chain is Avidin (AVD), found in Gallus gallus (Chicken).